The primary structure comprises 250 residues: MRAKIVAGNWKMNKNSEETEDLINELIDKLPTNSNAKIIIAPTFINLASAVDHTEFTNIRVAAQNMHQAENGAYTGEISADMLKSIGVNTVILGHSERRAIFHETDAIISFKVDTALRHEMTVIFCFGEELKDRQNKQHFNIVENQLRDGLFHIDKSAWANIILAYEPVWAIGTGETASPEQAQEMHEFIRETVRKVFGSDIAEDVSILYGGSVKPDNAKEIFSKPDVDGGLIGGAALKADDFVVIVNGI.

Residue 9-11 (NWK) participates in substrate binding. His-95 serves as the catalytic Electrophile. Glu-167 functions as the Proton acceptor in the catalytic mechanism. Substrate contacts are provided by residues Gly-173, Ser-213, and 234 to 235 (GG).

Belongs to the triosephosphate isomerase family. In terms of assembly, homodimer.

It is found in the cytoplasm. The catalysed reaction is D-glyceraldehyde 3-phosphate = dihydroxyacetone phosphate. It functions in the pathway carbohydrate biosynthesis; gluconeogenesis. It participates in carbohydrate degradation; glycolysis; D-glyceraldehyde 3-phosphate from glycerone phosphate: step 1/1. Functionally, involved in the gluconeogenesis. Catalyzes stereospecifically the conversion of dihydroxyacetone phosphate (DHAP) to D-glyceraldehyde-3-phosphate (G3P). The sequence is that of Triosephosphate isomerase from Flavobacterium psychrophilum (strain ATCC 49511 / DSM 21280 / CIP 103535 / JIP02/86).